The chain runs to 156 residues: ATP synthase subunit b (156 aa).

Residues 12 to 32 (VAFLIFVLFCMKFIWPPVIAA) form a helical membrane-spanning segment.

The protein belongs to the ATPase B chain family. In terms of assembly, F-type ATPases have 2 components, F(1) - the catalytic core - and F(0) - the membrane proton channel. F(1) has five subunits: alpha(3), beta(3), gamma(1), delta(1), epsilon(1). F(0) has three main subunits: a(1), b(2) and c(10-14). The alpha and beta chains form an alternating ring which encloses part of the gamma chain. F(1) is attached to F(0) by a central stalk formed by the gamma and epsilon chains, while a peripheral stalk is formed by the delta and b chains.

The protein resides in the cell inner membrane. Functionally, f(1)F(0) ATP synthase produces ATP from ADP in the presence of a proton or sodium gradient. F-type ATPases consist of two structural domains, F(1) containing the extramembraneous catalytic core and F(0) containing the membrane proton channel, linked together by a central stalk and a peripheral stalk. During catalysis, ATP synthesis in the catalytic domain of F(1) is coupled via a rotary mechanism of the central stalk subunits to proton translocation. Component of the F(0) channel, it forms part of the peripheral stalk, linking F(1) to F(0). This Pseudomonas fluorescens (strain ATCC BAA-477 / NRRL B-23932 / Pf-5) protein is ATP synthase subunit b.